The following is a 477-amino-acid chain: Bifunctional protein HldE (477 aa).

Residues 1-318 (MKVTLSEFER…ENAVRGRADT (318 aa)) are ribokinase. Lys179 is modified (N6-acetyllysine). 195–198 (NLSE) serves as a coordination point for ATP. Asp264 is an active-site residue. Residues 344 to 477 (MTNGVFDILH…IKKIQQDKKG (134 aa)) form a cytidylyltransferase region.

In the N-terminal section; belongs to the carbohydrate kinase PfkB family. This sequence in the C-terminal section; belongs to the cytidylyltransferase family. Homodimer.

It carries out the reaction D-glycero-beta-D-manno-heptose 7-phosphate + ATP = D-glycero-beta-D-manno-heptose 1,7-bisphosphate + ADP + H(+). The enzyme catalyses D-glycero-beta-D-manno-heptose 1-phosphate + ATP + H(+) = ADP-D-glycero-beta-D-manno-heptose + diphosphate. Its pathway is nucleotide-sugar biosynthesis; ADP-L-glycero-beta-D-manno-heptose biosynthesis; ADP-L-glycero-beta-D-manno-heptose from D-glycero-beta-D-manno-heptose 7-phosphate: step 1/4. The protein operates within nucleotide-sugar biosynthesis; ADP-L-glycero-beta-D-manno-heptose biosynthesis; ADP-L-glycero-beta-D-manno-heptose from D-glycero-beta-D-manno-heptose 7-phosphate: step 3/4. Catalyzes the phosphorylation of D-glycero-D-manno-heptose 7-phosphate at the C-1 position to selectively form D-glycero-beta-D-manno-heptose-1,7-bisphosphate. Its function is as follows. Catalyzes the ADP transfer from ATP to D-glycero-beta-D-manno-heptose 1-phosphate, yielding ADP-D-glycero-beta-D-manno-heptose. The protein is Bifunctional protein HldE of Shigella boydii serotype 18 (strain CDC 3083-94 / BS512).